We begin with the raw amino-acid sequence, 327 residues long: Serpentine receptor class alpha-33 (327 aa).

Helical transmembrane passes span 20-40 (FSVY…VLAI), 56-76 (LLIT…FLQN), 133-153 (FSHA…STVF), 186-206 (IIPY…LIIY), 227-247 (AVVS…LFCF), and 270-290 (IIGW…AVFL).

It belongs to the nematode receptor-like protein sra family.

It is found in the membrane. The sequence is that of Serpentine receptor class alpha-33 (sra-33) from Caenorhabditis elegans.